The following is a 58-amino-acid chain: UPF0391 membrane protein Patl_4137 (58 aa).

Transmembrane regions (helical) follow at residues 4 to 24 (WALT…GGIA) and 27 to 47 (AAGI…LSLV).

It belongs to the UPF0391 family.

The protein localises to the cell membrane. The polypeptide is UPF0391 membrane protein Patl_4137 (Pseudoalteromonas atlantica (strain T6c / ATCC BAA-1087)).